A 622-amino-acid polypeptide reads, in one-letter code: Chaperone protein HscA homolog (622 aa).

The protein belongs to the heat shock protein 70 family.

Its function is as follows. Chaperone involved in the maturation of iron-sulfur cluster-containing proteins. Has a low intrinsic ATPase activity which is markedly stimulated by HscB. The chain is Chaperone protein HscA homolog from Acidovorax ebreus (strain TPSY) (Diaphorobacter sp. (strain TPSY)).